The chain runs to 271 residues: Formamidopyrimidine-DNA glycosylase (271 aa).

P2 functions as the Schiff-base intermediate with DNA in the catalytic mechanism. E3 functions as the Proton donor in the catalytic mechanism. The Proton donor; for beta-elimination activity role is filled by K57. H90, R109, and R151 together coordinate DNA. Residues 236-270 (MVYGRAGEACVTCKTKLQEIRQSNRSSVFCPSCQQ) form an FPG-type zinc finger. The active-site Proton donor; for delta-elimination activity is the R260.

This sequence belongs to the FPG family. Monomer. Requires Zn(2+) as cofactor.

It carries out the reaction Hydrolysis of DNA containing ring-opened 7-methylguanine residues, releasing 2,6-diamino-4-hydroxy-5-(N-methyl)formamidopyrimidine.. The enzyme catalyses 2'-deoxyribonucleotide-(2'-deoxyribose 5'-phosphate)-2'-deoxyribonucleotide-DNA = a 3'-end 2'-deoxyribonucleotide-(2,3-dehydro-2,3-deoxyribose 5'-phosphate)-DNA + a 5'-end 5'-phospho-2'-deoxyribonucleoside-DNA + H(+). Its function is as follows. Involved in base excision repair of DNA damaged by oxidation or by mutagenic agents. Acts as a DNA glycosylase that recognizes and removes damaged bases. Has a preference for oxidized purines, such as 7,8-dihydro-8-oxoguanine (8-oxoG). Has AP (apurinic/apyrimidinic) lyase activity and introduces nicks in the DNA strand. Cleaves the DNA backbone by beta-delta elimination to generate a single-strand break at the site of the removed base with both 3'- and 5'-phosphates. The protein is Formamidopyrimidine-DNA glycosylase of Colwellia psychrerythraea (strain 34H / ATCC BAA-681) (Vibrio psychroerythus).